The chain runs to 64 residues: Prokaryotic ubiquitin-like protein Pup (64 aa).

The segment covering 1–11 (MAQEQTKRTGG) has biased composition (basic and acidic residues). Positions 1–37 (MAQEQTKRTGGGDEDDTPGADGAAGQERREKLAEDTD) are disordered. Residues 21-58 (DGAAGQERREKLAEDTDDLLDEIDDVLEENAEDFVRAY) form an ARC ATPase binding region. Residues 24-52 (AGQERREKLAEDTDDLLDEIDDVLEENAE) adopt a coiled-coil conformation. Q64 is modified (deamidated glutamine). An Isoglutamyl lysine isopeptide (Gln-Lys) (interchain with K-? in acceptor proteins) cross-link involves residue Q64.

The protein belongs to the prokaryotic ubiquitin-like protein family. Strongly interacts with the proteasome-associated ATPase ARC through a hydrophobic interface; the interacting region of Pup lies in its C-terminal half. There is one Pup binding site per ARC hexamer ring. Is modified by deamidation of its C-terminal glutamine to glutamate by the deamidase Dop, a prerequisite to the subsequent pupylation process.

It participates in protein degradation; proteasomal Pup-dependent pathway. In terms of biological role, protein modifier that is covalently attached to lysine residues of substrate proteins, thereby targeting them for proteasomal degradation. The tagging system is termed pupylation. In Rhodococcus jostii (strain RHA1), this protein is Prokaryotic ubiquitin-like protein Pup.